A 327-amino-acid chain; its full sequence is Ribonucleoside-diphosphate reductase small chain (327 aa).

Fe cation contacts are provided by Asp-70, Glu-101, and His-104. The active site involves Tyr-108. The Fe cation site is built by Glu-164, Glu-198, and His-201.

This sequence belongs to the ribonucleoside diphosphate reductase small chain family. In terms of assembly, heterotetramer composed of a homodimer of the large subunit (R1) and a homodimer of the small subunit (R2). Larger multisubunit protein complex are also active, composed of (R1)n(R2)n. It depends on Fe cation as a cofactor.

It carries out the reaction a 2'-deoxyribonucleoside 5'-diphosphate + [thioredoxin]-disulfide + H2O = a ribonucleoside 5'-diphosphate + [thioredoxin]-dithiol. Functionally, ribonucleoside-diphosphate reductase holoenzyme provides the precursors necessary for viral DNA synthesis. Allows virus growth in non-dividing cells. Catalyzes the biosynthesis of deoxyribonucleotides from the corresponding ribonucleotides. The sequence is that of Ribonucleoside-diphosphate reductase small chain from African swine fever virus (isolate Tick/South Africa/Pretoriuskop Pr4/1996) (ASFV).